The sequence spans 416 residues: Glutamyl-tRNA reductase (416 aa).

Substrate contacts are provided by residues 49–52, Ser-105, 110–112, and Gln-116; these read TCNR and EPQ. Cys-50 acts as the Nucleophile in catalysis. 185-190 is a binding site for NADP(+); it reads GAGETI.

Belongs to the glutamyl-tRNA reductase family. As to quaternary structure, homodimer.

It carries out the reaction (S)-4-amino-5-oxopentanoate + tRNA(Glu) + NADP(+) = L-glutamyl-tRNA(Glu) + NADPH + H(+). It functions in the pathway porphyrin-containing compound metabolism; protoporphyrin-IX biosynthesis; 5-aminolevulinate from L-glutamyl-tRNA(Glu): step 1/2. Its function is as follows. Catalyzes the NADPH-dependent reduction of glutamyl-tRNA(Glu) to glutamate 1-semialdehyde (GSA). This Shewanella halifaxensis (strain HAW-EB4) protein is Glutamyl-tRNA reductase.